The chain runs to 990 residues: Protein SUPPRESSOR OF MAX2 1 (990 aa).

The Clp R domain occupies 8-167 (IQQTLTPEAA…KATIEQSLNN (160 aa)). 2 repeat regions span residues 12 to 83 (LTPE…LERL) and 96 to 167 (ISNA…SLNN). Residues 818–855 (PKKEHGSGLSFDLNQAADTDDGSHNTSDLTTDNDQDEQ) form a disordered region. An EAR motif is present at residues 828-832 (FDLNQ).

It belongs to the ClpA/ClpB family. In terms of assembly, interacts probably with TPL/TPR in an EAR-motif dependent manner. Interacts with TPL, TPR1, TPR2 and TPR4. In terms of tissue distribution, highly expressed in dry seeds. Expressed in seedlings, rosette leaves and senescing leaves. Detected in roots and axillary shoots. Expressed in the primary rosette buds and expanding leaves of adult rosettes, the vasculature of the hypocotyls, cotyledons, and mature roots, in the midvein and petioles of young leaves, the young leaf periphery, stomata, and the root caps.

Probable component of a transcriptional corepressor complex that acts downstream of MAX2 to negatively regulate karrikins/strigolactone responses. Probable target of MAX2 during germination and seedling photomorphogenesis. Acts probably specifically in the karrikin pathway. This is Protein SUPPRESSOR OF MAX2 1 from Arabidopsis thaliana (Mouse-ear cress).